A 322-amino-acid polypeptide reads, in one-letter code: Phosphatidylserine decarboxylase proenzyme (322 aa).

Catalysis depends on charge relay system; for autoendoproteolytic cleavage activity residues D90, H147, and S254. S254 (schiff-base intermediate with substrate; via pyruvic acid; for decarboxylase activity) is an active-site residue. A Pyruvic acid (Ser); by autocatalysis modification is found at S254. The interval 290–322 (FVTPDSEPAPLPAEEIEAEHDASPLVDDKKDQV) is disordered. Basic and acidic residues predominate over residues 308–322 (EHDASPLVDDKKDQV).

Belongs to the phosphatidylserine decarboxylase family. PSD-B subfamily. Prokaryotic type I sub-subfamily. As to quaternary structure, heterodimer of a large membrane-associated beta subunit and a small pyruvoyl-containing alpha subunit. The cofactor is pyruvate. Post-translationally, is synthesized initially as an inactive proenzyme. Formation of the active enzyme involves a self-maturation process in which the active site pyruvoyl group is generated from an internal serine residue via an autocatalytic post-translational modification. Two non-identical subunits are generated from the proenzyme in this reaction, and the pyruvate is formed at the N-terminus of the alpha chain, which is derived from the carboxyl end of the proenzyme. The autoendoproteolytic cleavage occurs by a canonical serine protease mechanism, in which the side chain hydroxyl group of the serine supplies its oxygen atom to form the C-terminus of the beta chain, while the remainder of the serine residue undergoes an oxidative deamination to produce ammonia and the pyruvoyl prosthetic group on the alpha chain. During this reaction, the Ser that is part of the protease active site of the proenzyme becomes the pyruvoyl prosthetic group, which constitutes an essential element of the active site of the mature decarboxylase.

The protein localises to the cell membrane. It catalyses the reaction a 1,2-diacyl-sn-glycero-3-phospho-L-serine + H(+) = a 1,2-diacyl-sn-glycero-3-phosphoethanolamine + CO2. The protein operates within phospholipid metabolism; phosphatidylethanolamine biosynthesis; phosphatidylethanolamine from CDP-diacylglycerol: step 2/2. Functionally, catalyzes the formation of phosphatidylethanolamine (PtdEtn) from phosphatidylserine (PtdSer). This chain is Phosphatidylserine decarboxylase proenzyme, found in Escherichia fergusonii (strain ATCC 35469 / DSM 13698 / CCUG 18766 / IAM 14443 / JCM 21226 / LMG 7866 / NBRC 102419 / NCTC 12128 / CDC 0568-73).